A 67-amino-acid polypeptide reads, in one-letter code: Large ribosomal subunit protein uL29 (67 aa).

It belongs to the universal ribosomal protein uL29 family.

The chain is Large ribosomal subunit protein uL29 from Sulfurihydrogenibium sp. (strain YO3AOP1).